The chain runs to 91 residues: DNA-directed RNA polymerase subunit omega (91 aa).

The protein belongs to the RNA polymerase subunit omega family. As to quaternary structure, the RNAP catalytic core consists of 2 alpha, 1 beta, 1 beta' and 1 omega subunit. When a sigma factor is associated with the core the holoenzyme is formed, which can initiate transcription.

The enzyme catalyses RNA(n) + a ribonucleoside 5'-triphosphate = RNA(n+1) + diphosphate. In terms of biological role, promotes RNA polymerase assembly. Latches the N- and C-terminal regions of the beta' subunit thereby facilitating its interaction with the beta and alpha subunits. The protein is DNA-directed RNA polymerase subunit omega of Erwinia tasmaniensis (strain DSM 17950 / CFBP 7177 / CIP 109463 / NCPPB 4357 / Et1/99).